The following is a 284-amino-acid chain: Ribosomal RNA small subunit methyltransferase A (284 aa).

6 residues coordinate S-adenosyl-L-methionine: His12, Leu14, Gly47, Glu68, Asp93, and Asn118.

The protein belongs to the class I-like SAM-binding methyltransferase superfamily. rRNA adenine N(6)-methyltransferase family. RsmA subfamily.

It is found in the cytoplasm. It catalyses the reaction adenosine(1518)/adenosine(1519) in 16S rRNA + 4 S-adenosyl-L-methionine = N(6)-dimethyladenosine(1518)/N(6)-dimethyladenosine(1519) in 16S rRNA + 4 S-adenosyl-L-homocysteine + 4 H(+). Specifically dimethylates two adjacent adenosines (A1518 and A1519) in the loop of a conserved hairpin near the 3'-end of 16S rRNA in the 30S particle. May play a critical role in biogenesis of 30S subunits. In Synechocystis sp. (strain ATCC 27184 / PCC 6803 / Kazusa), this protein is Ribosomal RNA small subunit methyltransferase A.